We begin with the raw amino-acid sequence, 272 residues long: MSAGEISTPQEYIGHHLNNLQIDLRTFSLVDPHNPPATFWTLNIDSMFFSVVLGLLFLVLFRKVAKHATSGVPGKFQTAVELVIGFVHGSVQDMYHGKSKLIAPLALTIFVWVFLMNLMDLLPIDLLPYIGEHVFGLPALRVVPSADVNITLSMALGVFILILFYSIKMKGVGGFTKELTLQPFNHPVFIPINLILEGVSLLSKPVSLGLRLFGNMYAGELIFILIAGLLPWWSQWLLNVPWAIFHILIITLQAFIFMVLTIVYLSMASEEH.

5 helical membrane-spanning segments follow: residues 41 to 61 (TLNI…LVLF), 101 to 121 (LIAP…LMDL), 147 to 167 (DVNI…FYSI), 212 to 232 (LFGN…LLPW), and 243 to 263 (AIFH…LTIV).

The protein belongs to the ATPase A chain family. F-type ATPases have 2 components, CF(1) - the catalytic core - and CF(0) - the membrane proton channel. CF(1) has five subunits: alpha(3), beta(3), gamma(1), delta(1), epsilon(1). CF(0) has three main subunits: a(1), b(2) and c(9-12). The alpha and beta chains form an alternating ring which encloses part of the gamma chain. CF(1) is attached to CF(0) by a central stalk formed by the gamma and epsilon chains, while a peripheral stalk is formed by the delta and b chains.

Its subcellular location is the cell inner membrane. Its function is as follows. Key component of the proton channel; it plays a direct role in the translocation of protons across the membrane. The sequence is that of ATP synthase subunit a from Cronobacter sakazakii (strain ATCC BAA-894) (Enterobacter sakazakii).